The sequence spans 415 residues: Granaticin polyketide putative beta-ketoacyl synthase 2 (415 aa).

The region spanning 6-406 is the Ketosynthase family 3 (KS3) domain; that stretch reads RRRAVVTGLS…GFNSAVVVTL (401 aa).

This sequence belongs to the thiolase-like superfamily. Beta-ketoacyl-ACP synthases family.

It participates in antibiotic biosynthesis; granaticin biosynthesis. The sequence is that of Granaticin polyketide putative beta-ketoacyl synthase 2 (gra-orf2) from Streptomyces violaceoruber.